A 236-amino-acid chain; its full sequence is MTINALLLSSSRVGDTPYLSHALPFIKPLTANAQKWIFIPYAGVSMSYDTYLASVVAGLSELRLDISGIHQHPDPRQAIKDADGILIGGGNTFHLLHELYKYDLVHLIREEVQNGKPYIGWSAGSNVSGLSIRTTNDMPIIEPPSFTALNIVPFQLNPHYSNYRAPGHNGETRAQRLLEFTRVDPITPVVGIVEGSALWRQGDTLSLLGDNPAYLFCGEQQEIPIPVGSDLSHLLK.

Catalysis depends on charge relay system residues Ser-122, Asp-137, and His-159.

This sequence belongs to the peptidase S51 family.

The protein localises to the cytoplasm. The catalysed reaction is Dipeptidase E catalyzes the hydrolysis of dipeptides Asp-|-Xaa. It does not act on peptides with N-terminal Glu, Asn or Gln, nor does it cleave isoaspartyl peptides.. Functionally, hydrolyzes dipeptides containing N-terminal aspartate residues. May play a role in allowing the cell to use peptide aspartate to spare carbon otherwise required for the synthesis of the aspartate family of amino acids. This is Peptidase E from Shewanella sp. (strain ANA-3).